Reading from the N-terminus, the 107-residue chain is Sulfurtransferase Alvin_2599 (107 aa).

In terms of domain architecture, Rhodanese spans 16–104; it reads DTEDVLLVDI…WARHGLPIVA (89 aa). Cysteine 64 functions as the Cysteine persulfide intermediate in the catalytic mechanism.

Monomer.

Its subcellular location is the cytoplasm. It functions in the pathway energy metabolism; sulfur metabolism. Functionally, sulfur carrier protein involved in sulfur trafficking for oxidative dissimilatory sulfur metabolism. Component of a sulfur relay system that starts with the sulfur-mobilizing rhodanese-like protein Rhd_2599 (Alvin_2599), which transfers the sulfur from a low-molecular-weight thiol, maybe glutathione, to the TusA protein (Alvin_2600); TusA serves as the sulfur donor for DsrEFH, which persulfurates DsrC; persulfurated DsrC very probably serves as a direct substrate for reverse-acting sulfite reductase, DsrAB. Is able to catalyze the sulfur transfer reaction from thiosulfate or glutathione (GSSH) to cyanide in vitro, however, thiosulfate is unlikely an in vivo substrate. The polypeptide is Sulfurtransferase Alvin_2599 (Allochromatium vinosum (strain ATCC 17899 / DSM 180 / NBRC 103801 / NCIMB 10441 / D) (Chromatium vinosum)).